Here is a 105-residue protein sequence, read N- to C-terminus: Prokineticin-1 (105 aa).

Residues 1-19 (MRGAVHIFIMLLLATASDC) form the signal peptide. Cystine bridges form between Cys-26/Cys-38, Cys-32/Cys-50, Cys-37/Cys-78, Cys-60/Cys-86, and Cys-80/Cys-96.

This sequence belongs to the AVIT (prokineticin) family. In terms of tissue distribution, highly expressed in liver and ovary and weakly expressed in testis and placenta. Expressed in mucosa and mesenchyme of embryonic gut during enteric nervous system development (at protein level). Predominantly expressed in kidney and liver. Also expressed in lung, ovary, placenta and testis. In fetal liver, is restricted to and highly expressed in hepatocytes. In adult kidney, expression is restricted to the endothelial tubule cells. In placenta, expressed throughout gestation.

It is found in the secreted. Its function is as follows. Potently contracts gastrointestinal (GI) smooth muscle. Induces proliferation, migration and fenestration (the formation of membrane discontinuities) in capillary endothelial cells. Induces proliferation and differentiation, but not migration, of enteric neural crest cells. Directly influences neuroblastoma progression by promoting the proliferation and migration of neuroblastoma cells. Positively regulates PTGS2 expression and prostaglandin synthesis. May play a role in placentation. May play a role in normal and pathological testis angiogenesis. This Mus musculus (Mouse) protein is Prokineticin-1.